A 478-amino-acid polypeptide reads, in one-letter code: 9-divinyl ether synthase (478 aa).

Cys431 contacts heme.

This sequence belongs to the cytochrome P450 family. 9-divinyl ether synthase subfamily.

It catalyses the reaction (9S)-hydroperoxy-(10E,12Z)-octadecadienoate = colneleate + H2O. Its function is as follows. Involved in the biosynthesis of the anti-fungal toxins colneleic acid and colnelenic acid. The polypeptide is 9-divinyl ether synthase (DES) (Capsicum annuum (Capsicum pepper)).